The chain runs to 245 residues: Fibroblast growth factor 13 (245 aa).

The tract at residues 1-36 (MAAAIASSLIRQKRQAREREKSNACKCVSSPSKGKT) is disordered. The tract at residues 1-62 (MAAAIASSLI…GSKKRRRRRP (62 aa)) is mediates targeting to the nucleus. The tract at residues 67 to 201 (KGIVTKLYSR…AHFLPKPLKV (135 aa)) is mediates interaction with sodium channels. A Phosphoserine modification is found at S208. A disordered region spans residues 213–245 (TEFSRSGSGTPTKSRSVSGVLNGGKSMSHNEST). A compositionally biased stretch (polar residues) spans 215–245 (FSRSGSGTPTKSRSVSGVLNGGKSMSHNEST).

It belongs to the heparin-binding growth factors family. Interacts with SCN8A; regulates SCN8A activity. Interacts with SCN1A; may regulate SCN1A activity. Interacts with SCN5A; the interaction is direct and may regulate SNC5A density at membranes and function. May also interact with SCN2A and SCN11A. Interacts with MAPK8IP2; may regulate the MAPK8IP2 scaffolding activity. Post-translationally, may be phosphorylated. Ubiquitously expressed. Predominantly expressed in the nervous system.

The protein resides in the nucleus. Its subcellular location is the cytoplasm. It is found in the cell projection. The protein localises to the filopodium. It localises to the growth cone. The protein resides in the dendrite. Its subcellular location is the cell membrane. It is found in the sarcolemma. In terms of biological role, microtubule-binding protein which directly binds tubulin and is involved in both polymerization and stabilization of microtubules. Through its action on microtubules, may participate in the refinement of axons by negatively regulating axonal and leading processes branching. Plays a crucial role in neuron polarization and migration in the cerebral cortex and the hippocampus. Regulates voltage-gated sodium channel transport and function. May also play a role in MAPK signaling. Required for the development of axonal initial segment-targeting inhibitory GABAergic synapses made by chandelier neurons. The polypeptide is Fibroblast growth factor 13 (Homo sapiens (Human)).